Here is a 334-residue protein sequence, read N- to C-terminus: MADQIAISVLGAGSYGSALAISLARNGHPTLLWGHDPAHVAELEHDRCNKAFLPDVPFPADLQLTADLQRAVQAAPVLLLVVPSHVFGQVLSQVKPFLRPDTRIAWATKGLEPDSGRLLQDVARDVLGETIPLAVISGPTFAKELAAGLPTAISVASTHDDFADELSHLLHCGRSFRVYTNPDFVGLQLGGAVKNVIAIGAGLSDGLGFGANARTALITRGLVEMQRLGAALGADAKTFMGMAGLGDLVLTCTDNQSRNRRFGLALGAGKAVETAMAEIGQVVEGYRNTKEVHLLAARCGVEMPICEQIFQVLYQGKNPKEAAIALLSRDKRDE.

Ser-14, Tyr-15, His-35, and Lys-109 together coordinate NADPH. Residues Lys-109, Gly-138, and Thr-140 each contribute to the sn-glycerol 3-phosphate site. An NADPH-binding site is contributed by Ala-142. The sn-glycerol 3-phosphate site is built by Lys-194, Asp-247, Ser-257, Arg-258, and Asn-259. The active-site Proton acceptor is Lys-194. An NADPH-binding site is contributed by Arg-258. NADPH-binding residues include Val-282 and Glu-284.

The protein belongs to the NAD-dependent glycerol-3-phosphate dehydrogenase family.

Its subcellular location is the cytoplasm. The enzyme catalyses sn-glycerol 3-phosphate + NAD(+) = dihydroxyacetone phosphate + NADH + H(+). It carries out the reaction sn-glycerol 3-phosphate + NADP(+) = dihydroxyacetone phosphate + NADPH + H(+). It participates in membrane lipid metabolism; glycerophospholipid metabolism. Its function is as follows. Catalyzes the reduction of the glycolytic intermediate dihydroxyacetone phosphate (DHAP) to sn-glycerol 3-phosphate (G3P), the key precursor for phospholipid synthesis. In Aeromonas salmonicida (strain A449), this protein is Glycerol-3-phosphate dehydrogenase [NAD(P)+].